A 378-amino-acid chain; its full sequence is Pre-B-cell leukemia transcription factor 4 (378 aa).

The span at 1–15 (MAAPLRPVPPQPAPR) shows a compositional bias: pro residues. 2 disordered regions span residues 1–24 (MAAP…APLG) and 100–125 (VSRP…PNDN). Residues 22 to 214 (PLGHDTSDVL…VMTLRSRFLD (193 aa)) enclose the PBC domain. The segment at 29-107 (DVLQQIMAIT…EGVSRPEKRG (79 aa)) is PBC-A. Residues 109–120 (GAAAGSTATPGG) are compositionally biased toward low complexity. A PBC-B region spans residues 110-214 (AAAGSTATPG…VMTLRSRFLD (105 aa)). The segment at residues 215–277 (ARRKRRNFSK…NKRIRYKKNT (63 aa)) is a DNA-binding region (homeobox; TALE-type). Disordered stretches follow at residues 291-320 (ASTV…PLPL) and 355-378 (RAAP…AASN). The span at 356–370 (AAPQPASSPAGESGS) shows a compositional bias: low complexity.

It belongs to the TALE/PBX homeobox family. As to expression, almost exclusively expressed in testis.

The protein localises to the nucleus. This is Pre-B-cell leukemia transcription factor 4 (Pbx4) from Mus musculus (Mouse).